A 426-amino-acid chain; its full sequence is MSKSESLYAQAKQLIPGGVNSPVRAFTGVGGVPLFIERADGAYLFDVDGKAYIDYVGSWGPMVLGHNHPAIRQAVIEAVERGLSFGAPTEMEVKMAELVTNLVPTMDMVRMVNSGTEATMSAIRLARGFTGRDKIIKFEGCYHGHADCLLVKAGSGALTLGQPNSPGVPADFAKHTLTCTYNDLASVREAFEQYPRDIACIIVEPVAGNMNCVPPLPEFLPGLRALCDKFGALLIIDEVMTGFRVALAGAQDYYNVIPDLTCLGKIIGGGMPVGAFGGRRDVMDALAPTGPVYQAGTLSGNPIAMAAGFACLTEVAQVGIHETLTELTNLLADGLLDAAKAENIPLVVNHVGGMFGLFFTDAPTVTCYQDVMNCDVERFKRFFHLMLEEGVYLAPSAFEAGFMSVAHSKEDIQKTVDAARRCFAKL.

K265 is subject to N6-(pyridoxal phosphate)lysine.

Belongs to the class-III pyridoxal-phosphate-dependent aminotransferase family. HemL subfamily. In terms of assembly, homodimer. Requires pyridoxal 5'-phosphate as cofactor.

It is found in the cytoplasm. It carries out the reaction (S)-4-amino-5-oxopentanoate = 5-aminolevulinate. It participates in porphyrin-containing compound metabolism; protoporphyrin-IX biosynthesis; 5-aminolevulinate from L-glutamyl-tRNA(Glu): step 2/2. This chain is Glutamate-1-semialdehyde 2,1-aminomutase, found in Yersinia enterocolitica serotype O:8 / biotype 1B (strain NCTC 13174 / 8081).